A 532-amino-acid polypeptide reads, in one-letter code: CTP synthase (532 aa).

An amidoligase domain region spans residues 1-267 (MTKFIFVTGG…DDIVLKILGL (267 aa)). Residue S13 coordinates CTP. UTP is bound at residue S13. 14-19 (SLGKGI) contacts ATP. An L-glutamine-binding site is contributed by Y54. Residue D71 participates in ATP binding. Residues D71 and E141 each coordinate Mg(2+). CTP contacts are provided by residues 148 to 150 (DIE), 188 to 193 (KTKPTQ), and K224. Residues 188 to 193 (KTKPTQ) and K224 each bind UTP. Residues 292 to 532 (EIAIVGKYVE…EFVKATLANR (241 aa)) enclose the Glutamine amidotransferase type-1 domain. L-glutamine is bound at residue G354. C381 (nucleophile; for glutamine hydrolysis) is an active-site residue. Residues 382–385 (LGMQ), E405, and R462 each bind L-glutamine. Residues H507 and E509 contribute to the active site.

The protein belongs to the CTP synthase family. In terms of assembly, homotetramer.

The catalysed reaction is UTP + L-glutamine + ATP + H2O = CTP + L-glutamate + ADP + phosphate + 2 H(+). It carries out the reaction L-glutamine + H2O = L-glutamate + NH4(+). The enzyme catalyses UTP + NH4(+) + ATP = CTP + ADP + phosphate + 2 H(+). The protein operates within pyrimidine metabolism; CTP biosynthesis via de novo pathway; CTP from UDP: step 2/2. Its activity is regulated as follows. Allosterically activated by GTP, when glutamine is the substrate; GTP has no effect on the reaction when ammonia is the substrate. The allosteric effector GTP functions by stabilizing the protein conformation that binds the tetrahedral intermediate(s) formed during glutamine hydrolysis. Inhibited by the product CTP, via allosteric rather than competitive inhibition. Its function is as follows. Catalyzes the ATP-dependent amination of UTP to CTP with either L-glutamine or ammonia as the source of nitrogen. Regulates intracellular CTP levels through interactions with the four ribonucleotide triphosphates. In Desulfitobacterium hafniense (strain Y51), this protein is CTP synthase.